A 359-amino-acid polypeptide reads, in one-letter code: tRNA/tmRNA (uracil-C(5))-methyltransferase (359 aa).

5 residues coordinate S-adenosyl-L-methionine: Gln183, Tyr211, Asn216, Glu232, and Asp292. The Nucleophile role is filled by Cys317. The active-site Proton acceptor is the Glu351.

The protein belongs to the class I-like SAM-binding methyltransferase superfamily. RNA M5U methyltransferase family. TrmA subfamily.

It carries out the reaction uridine(54) in tRNA + S-adenosyl-L-methionine = 5-methyluridine(54) in tRNA + S-adenosyl-L-homocysteine + H(+). The catalysed reaction is uridine(341) in tmRNA + S-adenosyl-L-methionine = 5-methyluridine(341) in tmRNA + S-adenosyl-L-homocysteine + H(+). Functionally, dual-specificity methyltransferase that catalyzes the formation of 5-methyluridine at position 54 (m5U54) in all tRNAs, and that of position 341 (m5U341) in tmRNA (transfer-mRNA). The chain is tRNA/tmRNA (uracil-C(5))-methyltransferase from Pseudomonas fluorescens (strain ATCC BAA-477 / NRRL B-23932 / Pf-5).